We begin with the raw amino-acid sequence, 73 residues long: Large ribosomal subunit protein bL31 (73 aa).

The Zn(2+) site is built by Cys-16, Cys-18, Cys-36, and Cys-39.

It belongs to the bacterial ribosomal protein bL31 family. Type A subfamily. As to quaternary structure, part of the 50S ribosomal subunit. Zn(2+) serves as cofactor.

Binds the 23S rRNA. This chain is Large ribosomal subunit protein bL31, found in Desulfosudis oleivorans (strain DSM 6200 / JCM 39069 / Hxd3) (Desulfococcus oleovorans).